A 176-amino-acid chain; its full sequence is Ribosome maturation factor RimM (176 aa).

The 80-residue stretch at 97-176 (EDEFYWRDLI…QILVDWDPDF (80 aa)) folds into the PRC barrel domain.

This sequence belongs to the RimM family. As to quaternary structure, binds ribosomal protein uS19.

It localises to the cytoplasm. Functionally, an accessory protein needed during the final step in the assembly of 30S ribosomal subunit, possibly for assembly of the head region. Essential for efficient processing of 16S rRNA. May be needed both before and after RbfA during the maturation of 16S rRNA. It has affinity for free ribosomal 30S subunits but not for 70S ribosomes. The polypeptide is Ribosome maturation factor RimM (Shewanella sp. (strain ANA-3)).